The primary structure comprises 507 residues: ATP-dependent RNA helicase DDX47 (507 aa).

A compositionally biased stretch (acidic residues) spans M1 to D31. Positions M1–E58 are disordered. A Q motif motif is present at residues L61–R89. The 172-residue stretch at I92 to V263 folds into the Helicase ATP-binding domain. ATP is bound at residue A105–T112. The DEAD box signature appears at D211 to D214. Residues Y290 to M434 form the Helicase C-terminal domain. Residues Y426 to D453 are a coiled coil. The segment covering L451–S471 has biased composition (basic and acidic residues). Residues L451–R507 are disordered. A compositionally biased stretch (basic residues) spans S494–R507.

The protein belongs to the DEAD box helicase family. DDX47/RRP3 subfamily.

The protein resides in the nucleus. Its subcellular location is the nucleolus. It catalyses the reaction ATP + H2O = ADP + phosphate + H(+). In terms of biological role, part of a translational control module, also containing ath/DHX33 and ais/DDX52, which coordinates germline stem cell differentiation with ribosome biogenesis during oogenesis. This module allows for coregulation of ribosomal proteins and non1/GTPBP4, a p53 repressor, preventing p53 stabilization, cell cycle arrest and loss of stem cell differentiation. With atos, adjusts transcription and translation of a subset of OXPHOS genes in macrophages to increase mitochondrial bioenergetics and allow tissue invasion. This chain is ATP-dependent RNA helicase DDX47, found in Drosophila melanogaster (Fruit fly).